Reading from the N-terminus, the 739-residue chain is Gamma-tubulin complex component 4 homolog (739 aa).

Belongs to the TUBGCP family.

The protein localises to the cytoplasm. It localises to the cytoskeleton. The protein resides in the microtubule organizing center. In terms of biological role, gamma-tubulin complex is necessary for microtubule nucleation at the microtubule organizing centers (MTOCs). The chain is Gamma-tubulin complex component 4 homolog (85P) from Medicago truncatula (Barrel medic).